The chain runs to 230 residues: Large ribosomal subunit protein uL1 (230 aa).

This sequence belongs to the universal ribosomal protein uL1 family. As to quaternary structure, part of the 50S ribosomal subunit.

Functionally, binds directly to 23S rRNA. The L1 stalk is quite mobile in the ribosome, and is involved in E site tRNA release. Protein L1 is also a translational repressor protein, it controls the translation of the L11 operon by binding to its mRNA. The sequence is that of Large ribosomal subunit protein uL1 from Lactobacillus johnsonii (strain CNCM I-12250 / La1 / NCC 533).